Reading from the N-terminus, the 725-residue chain is Peroxisomal fatty acid beta-oxidation multifunctional protein MFP2 (725 aa).

Glu-119 functions as the Nucleophile in the catalytic mechanism. Glu-139 serves as the catalytic Proton acceptor. Residues 723–725 carry the Microbody targeting signal motif; that stretch reads SRL.

It in the N-terminal section; belongs to the enoyl-CoA hydratase/isomerase family. This sequence in the central section; belongs to the 3-hydroxyacyl-CoA dehydrogenase family. Highly expressed in senescing leaves and at lower levels in flowers and siliques.

Its subcellular location is the glyoxysome. The protein resides in the peroxisome. The enzyme catalyses a (3S)-3-hydroxyacyl-CoA = a (2E)-enoyl-CoA + H2O. It catalyses the reaction a 4-saturated-(3S)-3-hydroxyacyl-CoA = a (3E)-enoyl-CoA + H2O. The catalysed reaction is (3S)-3-hydroxybutanoyl-CoA = (2E)-butenoyl-CoA + H2O. It carries out the reaction (3S)-hydroxyoctanoyl-CoA = (2E)-octenoyl-CoA + H2O. The enzyme catalyses (3S)-3-hydroxydodecanoyl-CoA = (2E)-dodecenoyl-CoA + H2O. It catalyses the reaction (3S)-hydroxytetradecanoyl-CoA = (2E)-tetradecenoyl-CoA + H2O. The catalysed reaction is (3S)-hydroxyhexanoyl-CoA = (2E)-hexenoyl-CoA + H2O. It carries out the reaction a (3Z)-enoyl-CoA = a 4-saturated (2E)-enoyl-CoA. The enzyme catalyses a (3E)-enoyl-CoA = a 4-saturated (2E)-enoyl-CoA. It catalyses the reaction (3S)-3-hydroxybutanoyl-CoA = (3R)-3-hydroxybutanoyl-CoA. The catalysed reaction is a (3S)-3-hydroxyacyl-CoA + NAD(+) = a 3-oxoacyl-CoA + NADH + H(+). It carries out the reaction (3S)-3-hydroxybutanoyl-CoA + NAD(+) = acetoacetyl-CoA + NADH + H(+). The enzyme catalyses (3S)-hydroxyhexanoyl-CoA + NAD(+) = 3-oxohexanoyl-CoA + NADH + H(+). It catalyses the reaction (3S)-hydroxyoctanoyl-CoA + NAD(+) = 3-oxooctanoyl-CoA + NADH + H(+). The catalysed reaction is (3S)-3-hydroxydodecanoyl-CoA + NAD(+) = 3-oxododecanoyl-CoA + NADH + H(+). It carries out the reaction (3S)-hydroxytetradecanoyl-CoA + NAD(+) = 3-oxotetradecanoyl-CoA + NADH + H(+). It participates in lipid metabolism; fatty acid beta-oxidation. In terms of biological role, involved in peroxisomal fatty acid beta-oxidation during seed germination. Possesses enoyl-CoA hydratase activity against long chain substrates (C14-C18) and 3-hydroxyacyl-CoA dehydrogenase activity against chains of variable sizes (C6-C18). Possesses 3-hydroxy-3-phenylpropionyl-CoA dehydrogenase activity and is involved in the peroxisomal beta-oxidation pathway for the biosynthesis of benzoic acid (BA). Required for the accumulation in seeds of substituted hydroxybenzoylated choline esters, which are BA-containing secondary metabolites. Fatty acid beta-oxidation pathway in peroxisomes regulates gene silencing, histone acetylation and DNA methylation. This chain is Peroxisomal fatty acid beta-oxidation multifunctional protein MFP2, found in Arabidopsis thaliana (Mouse-ear cress).